The chain runs to 207 residues: Thiamine-phosphate synthase (207 aa).

4-amino-2-methyl-5-(diphosphooxymethyl)pyrimidine contacts are provided by residues 38–42 (QYRAK) and asparagine 70. Mg(2+)-binding residues include aspartate 71 and aspartate 90. Threonine 109 is a 4-amino-2-methyl-5-(diphosphooxymethyl)pyrimidine binding site. 135 to 137 (TNS) is a 2-[(2R,5Z)-2-carboxy-4-methylthiazol-5(2H)-ylidene]ethyl phosphate binding site. A 4-amino-2-methyl-5-(diphosphooxymethyl)pyrimidine-binding site is contributed by lysine 138. 2-[(2R,5Z)-2-carboxy-4-methylthiazol-5(2H)-ylidene]ethyl phosphate-binding positions include glycine 165 and 185 to 186 (IS).

It belongs to the thiamine-phosphate synthase family. Mg(2+) serves as cofactor.

It catalyses the reaction 2-[(2R,5Z)-2-carboxy-4-methylthiazol-5(2H)-ylidene]ethyl phosphate + 4-amino-2-methyl-5-(diphosphooxymethyl)pyrimidine + 2 H(+) = thiamine phosphate + CO2 + diphosphate. The catalysed reaction is 2-(2-carboxy-4-methylthiazol-5-yl)ethyl phosphate + 4-amino-2-methyl-5-(diphosphooxymethyl)pyrimidine + 2 H(+) = thiamine phosphate + CO2 + diphosphate. The enzyme catalyses 4-methyl-5-(2-phosphooxyethyl)-thiazole + 4-amino-2-methyl-5-(diphosphooxymethyl)pyrimidine + H(+) = thiamine phosphate + diphosphate. Its pathway is cofactor biosynthesis; thiamine diphosphate biosynthesis; thiamine phosphate from 4-amino-2-methyl-5-diphosphomethylpyrimidine and 4-methyl-5-(2-phosphoethyl)-thiazole: step 1/1. Functionally, condenses 4-methyl-5-(beta-hydroxyethyl)thiazole monophosphate (THZ-P) and 2-methyl-4-amino-5-hydroxymethyl pyrimidine pyrophosphate (HMP-PP) to form thiamine monophosphate (TMP). The polypeptide is Thiamine-phosphate synthase (Clostridium perfringens (strain 13 / Type A)).